Reading from the N-terminus, the 397-residue chain is L-asparaginase-like protein GM15681 (397 aa).

The first 22 residues, 1–22, serve as a signal peptide directing secretion; that stretch reads MLAQSCCLRLLILLLLFTSICS. Cystine bridges form between Cys-90/Cys-95, Cys-189/Cys-205, and Cys-344/Cys-371.

This sequence belongs to the Ntn-hydrolase family.

The sequence is that of L-asparaginase-like protein GM15681 from Drosophila sechellia (Fruit fly).